Consider the following 417-residue polypeptide: Phosphoglycerate kinase 1 (417 aa).

N-acetylserine is present on serine 2. Phosphoserine is present on residues serine 2 and serine 4. N6-succinyllysine is present on lysine 6. Lysine 11 is subject to N6-acetyllysine. Valine 23, aspartate 24, phenylalanine 25, asparagine 26, glutamine 38, arginine 39, serine 62, histidine 63, glycine 65, and arginine 66 together coordinate (2R)-3-phosphoglycerate. The tract at residues 38–43 is mitochondrial targeting region exposed following cis-trans isomerization by PIN1 and recognized by the TOM complex for mitochondrial translocation of the protein; sequence QRIKAA. Lysine 75 is modified (N6-acetyllysine). At tyrosine 76 the chain carries Phosphotyrosine. 2 positions are modified to N6-acetyllysine: lysine 86 and lysine 91. Lysine 97 is subject to N6-(2-hydroxyisobutyryl)lysine; alternate. Lysine 97 is modified (N6-acetyllysine; alternate). Residues leucine 122 and arginine 123 each contribute to the (2R)-3-phosphoglycerate site. Lysine 131 is modified (N6-acetyllysine; alternate). Residue lysine 131 is modified to N6-malonyllysine; alternate. N6-acetyllysine is present on lysine 146. Residues histidine 170 and arginine 171 each contribute to the (2R)-3-phosphoglycerate site. Lysine 191 is modified (N6-succinyllysine). Phosphotyrosine is present on tyrosine 196. Lysine 199 is subject to N6-acetyllysine. Serine 203 bears the Phosphoserine mark. Glycine 214 serves as a coordination point for ADP. Residue glycine 214 participates in CDP binding. Residues alanine 215 and lysine 216 each contribute to the AMP site. Alanine 215 is an ATP binding site. Alanine 215 contributes to the Mg(2+) binding site. Lysine 216 is modified (N6-(2-hydroxyisobutyryl)lysine). Residues alanine 218 and aspartate 219 each coordinate Mg(2+). Aspartate 219 lines the CDP pocket. AMP is bound at residue lysine 220. Lysine 220 provides a ligand contact to ATP. N6-(2-hydroxyisobutyryl)lysine is present on lysine 220. Glycine 238 contributes to the ADP binding site. CDP is bound at residue glycine 238. Residue glycine 239 participates in AMP binding. An ATP-binding site is contributed by glycine 239. 2 positions are modified to N6-acetyllysine: lysine 267 and lysine 291. Glycine 313 provides a ligand contact to AMP. Glycine 313 lines the ATP pocket. Lysine 323 is modified (N6-(2-hydroxyisobutyryl)lysine). Residues glycine 338, valine 340, and phenylalanine 343 each coordinate CDP. Residue phenylalanine 343 coordinates ADP. Residue glutamate 344 participates in AMP binding. ATP is bound by residues glutamate 344, aspartate 375, and threonine 376. Residue aspartate 375 participates in Mg(2+) binding.

The protein belongs to the phosphoglycerate kinase family. In terms of assembly, monomer. Interacts with kinase MAPK1/ERK2; the interaction is direct, occurs under hypoxic conditions, and promotes its interaction with PIN1. Interacts with peptidyl-prolyl cis-trans isomerase PIN1; the interaction is direct, occurs under hypoxic conditions, and targets the protein to the mitochondrion by promoting interactions with the TOM complex. Interacts with mitochondrial circRNA mcPGK1 (via its 2nd stem-loop); the interaction is direct and targets the protein to the mitochondrion by promoting interactions with the TOM complex. Interacts with pyruvate dehydrogenase kinase PDK1; the interaction is direct, occurs under hypoxic conditions and leads to PDK1-mediated inhibition of pyruvate dehydrogenase complex activity. The cofactor is Mg(2+). Phosphorylated at Ser-203 by MAPK1/ERK2 under hypoxic conditions, which promotes its mitochondrial targeting.

It localises to the cytoplasm. It is found in the cytosol. The protein localises to the mitochondrion matrix. It carries out the reaction (2R)-3-phosphoglycerate + ATP = (2R)-3-phospho-glyceroyl phosphate + ADP. It catalyses the reaction L-seryl-[protein] + ATP = O-phospho-L-seryl-[protein] + ADP + H(+). The protein operates within carbohydrate degradation; glycolysis; pyruvate from D-glyceraldehyde 3-phosphate: step 2/5. In terms of biological role, catalyzes one of the two ATP producing reactions in the glycolytic pathway via the reversible conversion of 1,3-diphosphoglycerate to 3-phosphoglycerate. Both L- and D- forms of purine and pyrimidine nucleotides can be used as substrates, but the activity is much lower on pyrimidines. In addition to its role as a glycolytic enzyme, it seems that PGK-1 acts as a polymerase alpha cofactor protein (primer recognition protein). Acts as a protein kinase when localized to the mitochondrion where it phosphorylates pyruvate dehydrogenase kinase PDK1 to inhibit pyruvate dehydrogenase complex activity and suppress the formation of acetyl-coenzyme A from pyruvate, and consequently inhibit oxidative phosphorylation and promote glycolysis. May play a role in sperm motility. In Notamacropus eugenii (Tammar wallaby), this protein is Phosphoglycerate kinase 1 (PGK1).